A 185-amino-acid polypeptide reads, in one-letter code: Ribosome-recycling factor (185 aa).

It belongs to the RRF family.

Its subcellular location is the cytoplasm. Responsible for the release of ribosomes from messenger RNA at the termination of protein biosynthesis. May increase the efficiency of translation by recycling ribosomes from one round of translation to another. This chain is Ribosome-recycling factor, found in Pectobacterium carotovorum subsp. carotovorum (strain PC1).